The following is a 202-amino-acid chain: Holliday junction branch migration complex subunit RuvA (202 aa).

Residues 1 to 63 (MIEYLKGAIV…EDAHLLYGFS (63 aa)) are domain I. A domain II region spans residues 64-142 (TKEERTLFGQ…LETSSDEILS (79 aa)). Residues 143–153 (ARTAVGDAALN) form a flexible linker region. Residues 153–202 (NTIASGEEAISALKMLGFADPAIRKAVKSILSEDSSLAVEDIIKRALRML) form a domain III region.

Belongs to the RuvA family. As to quaternary structure, homotetramer. Forms an RuvA(8)-RuvB(12)-Holliday junction (HJ) complex. HJ DNA is sandwiched between 2 RuvA tetramers; dsDNA enters through RuvA and exits via RuvB. An RuvB hexamer assembles on each DNA strand where it exits the tetramer. Each RuvB hexamer is contacted by two RuvA subunits (via domain III) on 2 adjacent RuvB subunits; this complex drives branch migration. In the full resolvosome a probable DNA-RuvA(4)-RuvB(12)-RuvC(2) complex forms which resolves the HJ.

It is found in the cytoplasm. Functionally, the RuvA-RuvB-RuvC complex processes Holliday junction (HJ) DNA during genetic recombination and DNA repair, while the RuvA-RuvB complex plays an important role in the rescue of blocked DNA replication forks via replication fork reversal (RFR). RuvA specifically binds to HJ cruciform DNA, conferring on it an open structure. The RuvB hexamer acts as an ATP-dependent pump, pulling dsDNA into and through the RuvAB complex. HJ branch migration allows RuvC to scan DNA until it finds its consensus sequence, where it cleaves and resolves the cruciform DNA. This Porphyromonas gingivalis (strain ATCC BAA-308 / W83) protein is Holliday junction branch migration complex subunit RuvA.